The chain runs to 127 residues: Calcitonin receptor-stimulating peptide 2 (127 aa).

A signal peptide spans 1-25 (MGFWKLSPFLAIGLLVMYQAGILQA). The propeptide occupies 26 to 81 (APFRSALENPLESATLTEDEICVLLTAVVKDYVQMKARELQQEQETEGSSLTAQKS). The disordered stretch occupies residues 65–85 (LQQEQETEGSSLTAQKSSCKD). The span at 72–81 (EGSSLTAQKS) shows a compositional bias: polar residues. Cys-83 and Cys-88 are disulfide-bonded.

This sequence belongs to the calcitonin family.

Its subcellular location is the secreted. The protein is Calcitonin receptor-stimulating peptide 2 (CRSP2) of Canis lupus familiaris (Dog).